A 736-amino-acid chain; its full sequence is Copper-exporting P-type ATPase (736 aa).

Residues 1–17 are compositionally biased toward basic residues; sequence MKHDHHQGHTHSGKGHA. A disordered region spans residues 1–32; it reads MKHDHHQGHTHSGKGHACHHEHNSPKTQQASS. 6 helical membrane-spanning segments follow: residues 85 to 105, 114 to 134, 149 to 169, 183 to 203, 341 to 361, and 369 to 389; these read FWIALMLTIPVVILEMGGHGL, SSWIQLLLATPVVLWGGWPFF, FTLIAMGIGVAWIYSMVAVLW, VVAVYFEAAAVITTLVLLGQV, GWFVPAVILVAVLSFIVWALL, and YGLIAAVSVLIIACPCALGLA. The 4-aspartylphosphate intermediate role is filled by aspartate 426. Positions 426, 428, and 624 each coordinate Mg(2+). Transmembrane regions (helical) follow at residues 682 to 702 and 706 to 726; these read LFFAFIYNVLGVPLAAGVLYP and LLLSPMIAAAAMALSSVSVII.

The protein belongs to the cation transport ATPase (P-type) (TC 3.A.3) family. Type IB subfamily. It depends on Mg(2+) as a cofactor.

Its subcellular location is the cell inner membrane. It catalyses the reaction Cu(+)(in) + ATP + H2O = Cu(+)(out) + ADP + phosphate + H(+). Activated by phospholipids, Mg(2+) and Cu(+). In terms of biological role, couples the hydrolysis of ATP with the export of copper. The protein is Copper-exporting P-type ATPase of Legionella pneumophila subsp. pneumophila (strain Philadelphia 1 / ATCC 33152 / DSM 7513).